The following is a 526-amino-acid chain: Anthranilate synthase component 1 (526 aa).

L-tryptophan is bound by residues Ser-40 and 304–306 (PYM). 341-342 (GT) is a binding site for chorismate. Position 374 (Glu-374) interacts with Mg(2+). Residues Tyr-461, Arg-481, 495-497 (GAG), and Gly-497 contribute to the chorismate site. Glu-510 serves as a coordination point for Mg(2+).

The protein belongs to the anthranilate synthase component I family. In terms of assembly, heterotetramer consisting of two non-identical subunits: a beta subunit (TrpG) and a large alpha subunit (TrpE). Mg(2+) serves as cofactor.

The catalysed reaction is chorismate + L-glutamine = anthranilate + pyruvate + L-glutamate + H(+). It participates in amino-acid biosynthesis; L-tryptophan biosynthesis; L-tryptophan from chorismate: step 1/5. With respect to regulation, feedback inhibited by tryptophan. Its function is as follows. Part of a heterotetrameric complex that catalyzes the two-step biosynthesis of anthranilate, an intermediate in the biosynthesis of L-tryptophan. In the first step, the glutamine-binding beta subunit (TrpG) of anthranilate synthase (AS) provides the glutamine amidotransferase activity which generates ammonia as a substrate that, along with chorismate, is used in the second step, catalyzed by the large alpha subunit of AS (TrpE) to produce anthranilate. In the absence of TrpG, TrpE can synthesize anthranilate directly from chorismate and high concentrations of ammonia. This Buchnera aphidicola subsp. Tetraneura caerulescens protein is Anthranilate synthase component 1 (trpE).